A 346-amino-acid chain; its full sequence is UDP-N-acetylenolpyruvoylglucosamine reductase (346 aa).

An FAD-binding PCMH-type domain is found at 18–189 (LRAQARAFIA…VSVVFALKTH (172 aa)). Arg-165 is an active-site residue. The active-site Proton donor is the Ser-240. The active site involves Glu-336.

This sequence belongs to the MurB family. It depends on FAD as a cofactor.

It is found in the cytoplasm. It carries out the reaction UDP-N-acetyl-alpha-D-muramate + NADP(+) = UDP-N-acetyl-3-O-(1-carboxyvinyl)-alpha-D-glucosamine + NADPH + H(+). It participates in cell wall biogenesis; peptidoglycan biosynthesis. Its function is as follows. Cell wall formation. The sequence is that of UDP-N-acetylenolpyruvoylglucosamine reductase from Neisseria meningitidis serogroup B (strain ATCC BAA-335 / MC58).